A 224-amino-acid polypeptide reads, in one-letter code: Deoxyribose-phosphate aldolase (224 aa).

Aspartate 92 acts as the Proton donor/acceptor in catalysis. Lysine 155 functions as the Schiff-base intermediate with acetaldehyde in the catalytic mechanism. Lysine 184 functions as the Proton donor/acceptor in the catalytic mechanism.

It belongs to the DeoC/FbaB aldolase family. DeoC type 1 subfamily.

The protein localises to the cytoplasm. The catalysed reaction is 2-deoxy-D-ribose 5-phosphate = D-glyceraldehyde 3-phosphate + acetaldehyde. The protein operates within carbohydrate degradation; 2-deoxy-D-ribose 1-phosphate degradation; D-glyceraldehyde 3-phosphate and acetaldehyde from 2-deoxy-alpha-D-ribose 1-phosphate: step 2/2. Its function is as follows. Catalyzes a reversible aldol reaction between acetaldehyde and D-glyceraldehyde 3-phosphate to generate 2-deoxy-D-ribose 5-phosphate. This is Deoxyribose-phosphate aldolase from Shouchella clausii (strain KSM-K16) (Alkalihalobacillus clausii).